We begin with the raw amino-acid sequence, 440 residues long: Murein DD-endopeptidase MepM (440 aa).

The chain crosses the membrane as a helical span at residues 21 to 40; sequence VMLGSLTVLTLAVAVWRPYV. Residues 96–141 enclose the LysM domain; it reads HEYVVSTGDTLSSILNQYGIDMGDITQLAAADKELRNLKIGQQLSW. His314 is a Zn(2+) binding site.

This sequence belongs to the peptidase M23B family. It depends on Zn(2+) as a cofactor.

The protein resides in the cell membrane. It participates in cell wall biogenesis; cell wall polysaccharide biosynthesis. Its function is as follows. A murein DD-endopeptidase with specificity for D-Ala-meso-diaminopimelic acid (mDAP) cross-links. Its role is probably to cleave D-Ala-mDAP cross-links to allow insertion of new glycans and thus cell wall expansion. Functionally redundant with MepM and MepH. This Escherichia coli O6:H1 (strain CFT073 / ATCC 700928 / UPEC) protein is Murein DD-endopeptidase MepM (mepM).